The following is a 184-amino-acid chain: GTP-binding protein Rheb (184 aa).

K8 participates in a covalent cross-link: Glycyl lysine isopeptide (Lys-Gly) (interchain with G-Cter in ubiquitin). The GDP site is built by S16, V17, G18, K19, S20, S21, V32, and D33. S16 provides a ligand contact to GTP. Residues G18, K19, S20, S21, and V32 each contribute to the GTP site. S20 is a Mg(2+) binding site. Residues Y35, T38, N119, and D122 each contribute to the GTP site. Residues 35 to 43 carry the Effector region motif; the sequence is YDPTIENTF. Position 38 (T38) interacts with Mg(2+). Residues N119 and D122 each contribute to the GDP site. At S130 the chain carries Phosphoserine; by MAPKAPK5. GDP is bound at residue A150. A150 is a GTP binding site. C181 carries the cysteine methyl ester modification. A lipid anchor (S-farnesyl cysteine) is attached at C181. A propeptide spans 182-184 (removed in mature form); the sequence is SVM.

The protein belongs to the small GTPase superfamily. Rheb family. In terms of assembly, associates with the mTORC1 complex (MTOR, MLST8 and RPTOR) in a guanyl nucleotide-independent manner. Interacts with TSC2. Interacts with MCRS1; the interaction maintains RHEB at the lysosome in its active GTP-bound form and prevents its interaction with the mTORC1 complex inhibitor TSC2, ensuring activation of the mTORC1 complex by RHEB. Interacts (when prenylated) with PDE6D; this promotes release from membranes. Post-translationally, farnesylation is important for efficiently activating mTORC1-mediated signaling. In terms of processing, polyubiquitinated in response to amino acid, promoting its interaction with MTOR and mTORC1 activation. Deubiquitination by ATXN3 promotes recruitment of the TSC-TBC complex and RHEB inactivation by TSC2. Monoubiquitinated at Lys-8 by RNF152, promoting its association with the TSC-TBC complex. Deubiquitinated at Lys-8 by USP4, promoting mTORC1 activation. Phosphorylation by MAPKAPK5 impairs GTP-binding and inactivation. Ubiquitous. Highest levels observed in skeletal and cardiac muscle.

The protein localises to the endomembrane system. The protein resides in the lysosome membrane. Its subcellular location is the golgi apparatus membrane. It is found in the endoplasmic reticulum membrane. It localises to the cytoplasm. The protein localises to the cytosol. The enzyme catalyses GTP + H2O = GDP + phosphate + H(+). With respect to regulation, alternates between an inactive form bound to GDP and an active form bound to GTP. Inactivated by the TSC-TBC complex via the GTPase activating protein (GAP) domain of TSC2. Autoinhibited by Tyr-35, which constrains the active site conformation, restricting the access of the catalytic Asp-65 to the nucleotide-binding pocket. Specifically inhibited by NR1 (4-bromo-6-(3,4-dichlorophenylthio)-1-(4-(dimethylcarbamoyl)benzyl)-1H-indole-2-carboxylic acid). Functionally, small GTPase that acts as an allosteric activator of the canonical mTORC1 complex, an evolutionarily conserved central nutrient sensor that stimulates anabolic reactions and macromolecule biosynthesis to promote cellular biomass generation and growth. In response to nutrients, growth factors or amino acids, specifically activates the protein kinase activity of MTOR, the catalytic component of the mTORC1 complex: acts by causing a conformational change that allows the alignment of residues in the active site of MTOR, thereby enhancing the phosphorylation of ribosomal protein S6 kinase (RPS6KB1 and RPS6KB2) and EIF4EBP1 (4E-BP1). RHEB is also required for localization of the TSC-TBC complex to lysosomal membranes. In response to starvation, RHEB is inactivated by the TSC-TBC complex, preventing activation of mTORC1. Has low intrinsic GTPase activity. The chain is GTP-binding protein Rheb from Homo sapiens (Human).